Reading from the N-terminus, the 395-residue chain is Guanine nucleotide-binding protein subunit beta-5 (395 aa).

WD repeat units lie at residues 103 to 142 (GHGN…KEHA), 145 to 184 (MPCT…NENM), 193 to 234 (MHTN…QSFH), 236 to 278 (HGAD…QAFE), 279 to 318 (THES…EVAI), 320 to 362 (SKES…RVSI), and 365 to 394 (GHEN…LRVW).

This sequence belongs to the WD repeat G protein beta family. In terms of assembly, component of a complex composed of RGS9 (isoform RGS9-1), GNB5 and RGS9BP; within this complex, the presence of GNB5 stabilizes both itself and RGS9 and increases RGS9 GTPase-activating protein (GAP) activity. Interacts with RGS7, forming the RGS7-GNB5 complex; within this complex, the presence of GNB5 increases RGS7 GTPase-activating protein (GAP) activity. Interacts with GPR158; promotes the GTPase activator activity of the RGS7-GNB5 complex in absence of glycine, in contrast GTPase activator activity of the RGS7-GNB5 complex is inhibited in presence of glycine. Interacts with RGS6. In terms of tissue distribution, widely expressed.

It is found in the membrane. Enhances GTPase-activating protein (GAP) activity of regulator of G protein signaling (RGS) proteins, such as RGS7 and RGS9, hence involved in the termination of the signaling initiated by the G protein coupled receptors (GPCRs) by accelerating the GTP hydrolysis on the G-alpha subunits, thereby promoting their inactivation. Increases RGS7 GTPase-activating protein (GAP) activity, thereby regulating mood and cognition. Increases RGS9 GTPase-activating protein (GAP) activity, hence contributes to the deactivation of G protein signaling initiated by D(2) dopamine receptors. May play an important role in neuronal signaling, including in the parasympathetic, but not sympathetic, control of heart rate. This chain is Guanine nucleotide-binding protein subunit beta-5 (GNB5), found in Homo sapiens (Human).